Here is a 193-residue protein sequence, read N- to C-terminus: Lipid A acyltransferase PagP (193 aa).

An N-terminal signal peptide occupies residues 1-32 (MNGMAVVMIIRKYFLIIALLVMPWLAIPSVSA). Residues H65, D108, and S109 contribute to the active site.

Belongs to the lipid A palmitoyltransferase family. In terms of assembly, homodimer.

It localises to the cell outer membrane. It carries out the reaction a lipid A + a 1,2-diacyl-sn-glycero-3-phosphocholine = a hepta-acyl lipid A + a 2-acyl-sn-glycero-3-phosphocholine. The catalysed reaction is a lipid IVA + a 1,2-diacyl-sn-glycero-3-phosphocholine = a lipid IVB + a 2-acyl-sn-glycero-3-phosphocholine. The enzyme catalyses a lipid IIA + a 1,2-diacyl-sn-glycero-3-phosphocholine = a lipid IIB + a 2-acyl-sn-glycero-3-phosphocholine. Transfers a fatty acid residue from the sn-1 position of a phospholipid to the N-linked hydroxyfatty acid chain on the proximal unit of lipid A or its precursors. The chain is Lipid A acyltransferase PagP from Salmonella paratyphi C (strain RKS4594).